Consider the following 376-residue polypeptide: Actin-related protein T1 (376 aa).

Belongs to the actin family.

It is found in the cytoplasm. The protein resides in the cytoskeleton. It localises to the nucleus. Its subcellular location is the cytoplasmic vesicle. The protein localises to the secretory vesicle. It is found in the acrosome. Negatively regulates the Hedgehog (SHH) signaling. Binds to the promoter of the SHH signaling mediator, GLI1, and inhibits its expression. In Mus musculus (Mouse), this protein is Actin-related protein T1 (Actrt1).